The sequence spans 813 residues: MNRRRAYEDDGDFYGERSRKRRRVSENQEMEERLETLILRVGENSSSSLESNLEGLVSVLESDLGNFRSKILRILSECPIKMPEKCTIYSTMVGLMNAKNYNFGGEFVDHMVKTFKESLKQCRWDAARYALRFLSDLVNCHVISTNSLLQLLDNMVDAANEDSVPQVRRDWYVFAVLSTLPWVGRELYEKKESALENLLVRIEVFLNKRTKKHHNSLRVWSVDAPHPQEEYLDCLWAQIRKLRQDNWAEKHIPRPYLAFDSVLCEALQHNLPLIHPPPHQDSFEYPMPWVVYRMFDYTDCPAGPILPGAHSIERFLIEEHLHSIIEAHHWERKDCAANLLNLSYKDKIPLEYCIVEVIFAELFKMPTPRYLDICYGSILIELCKLQPSKMPQVLAQATEILFMRIDSMNTSCFDRFANWFSYHLSNFQFRWSWDDWDSCLLLEPEHPRPKFIEEVLLKCLRLSYHDRFKEMMPETYSKLIPKPPMPTYKYTMEGAASLPGTATAHKLVVAIRQKCTPEDVLNELKDLPNPRETSENDMVESTFNPLKIDVFVQTLLNLGSKSFSHTFAAISKFHLVFKTLAETEEAQICILHNVFELWVNHQQMMVVIIDKLLKTQIVECSAVATWVFSKEMVGEFTKMYLWEILHLTIKKMNQHVTKLSKELSDAKERLDRNAESSSSESEEETAPAGTDAVTPQRRRKKPIGDNADKPTEEQVERMEEKLEAAYVDQKRLFLIIFQRFIMILSEHLVKCDTDGRDYDTDWYRWTVGRLQQVFMMHHEQVKKYSSTLESLLFTSDIDPHILDVFHQFTALRS.

In terms of domain architecture, MIF4G spans 31-243; sequence EERLETLILR…CLWAQIRKLR (213 aa). The tract at residues 667–716 is disordered; it reads KERLDRNAESSSSESEEETAPAGTDAVTPQRRRKKPIGDNADKPTEEQVE. A compositionally biased stretch (basic and acidic residues) spans 702–716; it reads PIGDNADKPTEEQVE.

This sequence belongs to the NCBP1 family. In terms of assembly, component of the nuclear cap-binding complex (CBC), a heterodimer composed of Cbp80 and Cbp20 that interacts with m7GpppG-capped RNA.

The protein localises to the nucleus. Its function is as follows. Component of the cap-binding complex (CBC), which binds cotranscriptionally to the 5'-cap of pre-mRNAs and is involved in various processes such as pre-mRNA splicing and RNA-mediated gene silencing (RNAi). The CBC complex is involved in miRNA-mediated RNA interference and is required for primary microRNAs (miRNAs) processing. Also involved in innate immunity via the short interfering RNAs (siRNAs) processing machinery by restricting the viral RNA production. In the CBC complex, Cbp80 does not bind directly capped RNAs (m7GpppG-capped RNA) but is required to stabilize the movement of the N-terminal loop of Cbp20 and lock the CBC into a high affinity cap-binding state with the cap structure. This Aedes aegypti (Yellowfever mosquito) protein is Nuclear cap-binding protein subunit 1 (Cbp80).